Reading from the N-terminus, the 87-residue chain is Small ribosomal subunit protein bS20 (87 aa).

It belongs to the bacterial ribosomal protein bS20 family.

Its function is as follows. Binds directly to 16S ribosomal RNA. The polypeptide is Small ribosomal subunit protein bS20 (Clostridium perfringens (strain 13 / Type A)).